A 154-amino-acid chain; its full sequence is Putative pre-16S rRNA nuclease (154 aa).

Belongs to the YqgF nuclease family.

The protein localises to the cytoplasm. Its function is as follows. Could be a nuclease involved in processing of the 5'-end of pre-16S rRNA. The chain is Putative pre-16S rRNA nuclease from Ruegeria pomeroyi (strain ATCC 700808 / DSM 15171 / DSS-3) (Silicibacter pomeroyi).